The primary structure comprises 296 residues: Sperm-activating peptides (296 aa).

3 consecutive propeptides follow at residues 1 to 134 (MPPG…MYKK), 146 to 190 (MLSN…MILK), and 290 to 296 (EVEIKDW).

Its function is as follows. Causes stimulation of sperm respiration and motility through intracellular alkalinization, transient elevations of cAMP, cGMP and calcium levels in sperm cells, and transient activation and subsequent inactivation of the membrane form of guanylate cyclase. The chain is Sperm-activating peptides from Strongylocentrotus purpuratus (Purple sea urchin).